A 455-amino-acid chain; its full sequence is MTDGRQQHTRRAPTTDIYDATELTRAFEQLMRTKRFNSLQEQSRSRSRTQSPSHAQPYHTPPHPSRAPPPPPTGAHYPSSQSPSQQHQQHQLPASSSLRNLPVFPSPPRDQQSLKFRNLLHVLSVTPTKYENPGLLDEALSLIPLDRLYSEAEEESQIMQAQAASVGGKPEWGYQDCVIRALLRWFKNSFFQFVNNPPCSRCLMPTIAQGMTPPTPDETARGATRVELYRCSESTCGSYERFPRYSDVWQLLQSRRGRVGEWANCFSMFCRALGGRVRWVWNSEDYVWTEVYSEHQRRWVHVDACEGAWDQPRLYTEGWGRKLSYCIAFSIDGATDVTRRYVRSPVKHGAPRNRVPEEVLVWIIHEIRKKRRESMSKTDQRRLMKEDEREEKELRAYMASALAAEINNLIPREQTSGRPGEQKTPASMQDTPVDWVAAQQMGPGQSGPDRSQDGR.

Positions Met-1–Asp-110 are disordered. The span at Ser-38–Ser-53 shows a compositional bias: low complexity. Positions His-59–Thr-73 are enriched in pro residues. Over residues Gly-74–Leu-98 the composition is skewed to low complexity. Zn(2+)-binding residues include Cys-199, Cys-202, Cys-231, and Cys-236. The disordered stretch occupies residues Asn-408–Arg-455.

The protein belongs to the transglutaminase-like superfamily. PNGase family.

The protein is Protein png1 (png1) of Aspergillus fumigatus (strain ATCC MYA-4609 / CBS 101355 / FGSC A1100 / Af293) (Neosartorya fumigata).